A 331-amino-acid polypeptide reads, in one-letter code: Vitamin B12 import system permease protein BtuC (331 aa).

9 consecutive transmembrane segments (helical) span residues 20–42 (LLIG…WLSP), 62–84 (LLAA…VLLG), 91–113 (GVVG…FPSL), 117–136 (VAFM…LLVV), 148–170 (LLLV…FYFS), 190–209 (SWYQ…WLVL), 240–262 (LAIA…VGLV), 277–299 (LLLP…IARL), and 306–325 (LPLG…WMLV).

The protein belongs to the binding-protein-dependent transport system permease family. FecCD subfamily. The complex is composed of two ATP-binding proteins (BtuD), two transmembrane proteins (BtuC) and a solute-binding protein (BtuF).

It localises to the cell inner membrane. Part of the ABC transporter complex BtuCDF involved in vitamin B12 import. Involved in the translocation of the substrate across the membrane. The chain is Vitamin B12 import system permease protein BtuC from Vibrio cholerae serotype O1 (strain ATCC 39315 / El Tor Inaba N16961).